A 631-amino-acid chain; its full sequence is Probable potassium transport system protein Kup 1 (631 aa).

Helical transmembrane passes span 16–36, 58–78, 109–129, 145–165, 173–193, 219–239, 255–275, 288–308, 345–365, 370–390, 402–422, and 427–447; these read LGLS…SPLY, VLSL…LVFV, VLVF…TLTP, PLFH…LFLI, VGAL…LLGI, GWSG…GEAL, WFCC…ALLL, LAPP…TIIA, IYIP…VAGF, GLAA…ALLV, PLAV…FFGA, and VGAG…VMIT.

It belongs to the HAK/KUP transporter (TC 2.A.72) family.

The protein localises to the cell inner membrane. It carries out the reaction K(+)(in) + H(+)(in) = K(+)(out) + H(+)(out). Functionally, transport of potassium into the cell. Likely operates as a K(+):H(+) symporter. In Geobacter sulfurreducens (strain ATCC 51573 / DSM 12127 / PCA), this protein is Probable potassium transport system protein Kup 1.